Consider the following 389-residue polypeptide: uncharacterized protein (389 aa).

Residues 1-23 (MHFAKLGAIGLLGSIICAYAASA) form the signal peptide.

The protein belongs to the IUNH family.

It is found in the endoplasmic reticulum lumen. This is an uncharacterized protein from Schizosaccharomyces pombe (strain 972 / ATCC 24843) (Fission yeast).